The following is a 135-amino-acid chain: UPF0355 protein SE_2351 (135 aa).

It belongs to the UPF0355 family.

The protein is UPF0355 protein SE_2351 of Staphylococcus epidermidis (strain ATCC 12228 / FDA PCI 1200).